Reading from the N-terminus, the 557-residue chain is Dihydroxy-acid dehydratase (557 aa).

Asp-78 contributes to the Mg(2+) binding site. Residue Cys-119 participates in [2Fe-2S] cluster binding. Residues Asp-120 and Lys-121 each contribute to the Mg(2+) site. Lys-121 carries the N6-carboxylysine modification. [2Fe-2S] cluster is bound at residue Cys-192. Residue Glu-442 coordinates Mg(2+). Ser-468 (proton acceptor) is an active-site residue.

Belongs to the IlvD/Edd family. As to quaternary structure, homodimer. It depends on [2Fe-2S] cluster as a cofactor. Mg(2+) serves as cofactor.

It carries out the reaction (2R)-2,3-dihydroxy-3-methylbutanoate = 3-methyl-2-oxobutanoate + H2O. It catalyses the reaction (2R,3R)-2,3-dihydroxy-3-methylpentanoate = (S)-3-methyl-2-oxopentanoate + H2O. The protein operates within amino-acid biosynthesis; L-isoleucine biosynthesis; L-isoleucine from 2-oxobutanoate: step 3/4. It participates in amino-acid biosynthesis; L-valine biosynthesis; L-valine from pyruvate: step 3/4. Functions in the biosynthesis of branched-chain amino acids. Catalyzes the dehydration of (2R,3R)-2,3-dihydroxy-3-methylpentanoate (2,3-dihydroxy-3-methylvalerate) into 2-oxo-3-methylpentanoate (2-oxo-3-methylvalerate) and of (2R)-2,3-dihydroxy-3-methylbutanoate (2,3-dihydroxyisovalerate) into 2-oxo-3-methylbutanoate (2-oxoisovalerate), the penultimate precursor to L-isoleucine and L-valine, respectively. The protein is Dihydroxy-acid dehydratase of Bacillus thuringiensis subsp. konkukian (strain 97-27).